Consider the following 164-residue polypeptide: 6,7-dimethyl-8-ribityllumazine synthase (164 aa).

5-amino-6-(D-ribitylamino)uracil is bound by residues Tyr30, 61–63, and 85–87; these read ALE and CVI. Position 90 to 91 (90 to 91) interacts with (2S)-2-hydroxy-3-oxobutyl phosphate; sequence ET. The active-site Proton donor is the His93. Asn118 is a binding site for 5-amino-6-(D-ribitylamino)uracil. (2S)-2-hydroxy-3-oxobutyl phosphate is bound at residue Arg132.

This sequence belongs to the DMRL synthase family.

It catalyses the reaction (2S)-2-hydroxy-3-oxobutyl phosphate + 5-amino-6-(D-ribitylamino)uracil = 6,7-dimethyl-8-(1-D-ribityl)lumazine + phosphate + 2 H2O + H(+). It functions in the pathway cofactor biosynthesis; riboflavin biosynthesis; riboflavin from 2-hydroxy-3-oxobutyl phosphate and 5-amino-6-(D-ribitylamino)uracil: step 1/2. In terms of biological role, catalyzes the formation of 6,7-dimethyl-8-ribityllumazine by condensation of 5-amino-6-(D-ribitylamino)uracil with 3,4-dihydroxy-2-butanone 4-phosphate. This is the penultimate step in the biosynthesis of riboflavin. This chain is 6,7-dimethyl-8-ribityllumazine synthase, found in Methylobacterium radiotolerans (strain ATCC 27329 / DSM 1819 / JCM 2831 / NBRC 15690 / NCIMB 10815 / 0-1).